Consider the following 362-residue polypeptide: Peptide chain release factor 1 (362 aa).

At Gln-238 the chain carries N5-methylglutamine.

The protein belongs to the prokaryotic/mitochondrial release factor family. Methylated by PrmC. Methylation increases the termination efficiency of RF1.

Its subcellular location is the cytoplasm. In terms of biological role, peptide chain release factor 1 directs the termination of translation in response to the peptide chain termination codons UAG and UAA. This is Peptide chain release factor 1 from Psychrobacter arcticus (strain DSM 17307 / VKM B-2377 / 273-4).